A 337-amino-acid chain; its full sequence is LIX1-like protein (337 aa).

A disordered region spans residues 1-64 (METMRAQRLQ…PLLLSGAPGL (64 aa)). Residues 26 to 38 (PGVTGAAAATATP) show a composition bias toward low complexity. Positions 39–56 (PAGPPPAPPPPAPPPPPL) are enriched in pro residues.

Belongs to the LIX1 family.

In Homo sapiens (Human), this protein is LIX1-like protein (LIX1L).